A 516-amino-acid chain; its full sequence is L-amino-acid oxidase (516 aa).

The first 18 residues, 1–18 (MNVFFMFSLLFLAALGSC), serve as a signal peptide directing secretion. Cys28 and Cys191 form a disulfide bridge. FAD is bound by residues 61–62 (MS), 81–82 (EA), Arg89, and 105–108 (GPMR). Residue Arg108 participates in substrate binding. A glycan (N-linked (GlcNAc...) asparagine) is linked at Asn190. His241 lines the substrate pocket. Residue Val279 participates in FAD binding. An intrachain disulfide couples Cys349 to Cys430. A glycan (N-linked (GlcNAc...) asparagine) is linked at Asn379. Position 390 (Tyr390) interacts with substrate. FAD contacts are provided by residues Glu475, 481 to 486 (HGWIDS), and 482 to 487 (GWIDSS). Substrate is bound by residues 481–482 (HG) and 482–483 (GW).

It belongs to the flavin monoamine oxidase family. FIG1 subfamily. As to quaternary structure, homodimer; non-covalently linked. FAD serves as cofactor. N-glycosylated. As to expression, expressed by the venom gland.

It is found in the secreted. It catalyses the reaction an L-alpha-amino acid + O2 + H2O = a 2-oxocarboxylate + H2O2 + NH4(+). In terms of biological role, catalyzes an oxidative deamination of predominantly hydrophobic and aromatic L-amino acids, thus producing hydrogen peroxide that may contribute to the diverse toxic effects of this enzyme. Exhibits diverse biological activities, such as hemorrhage, hemolysis, edema, apoptosis of vascular endothelial cells or tumor cell lines, antibacterial and antiparasitic activities, as well as regulation of platelet aggregation. Effects of snake L-amino oxidases on platelets are controversial, since they either induce aggregation or inhibit agonist-induced aggregation. These different effects are probably due to different experimental conditions. Displays dose-dependent inhibition on HIV-1 infection and replication. This Trimeresurus stejnegeri (Chinese green tree viper) protein is L-amino-acid oxidase.